The following is a 153-amino-acid chain: SsrA-binding protein (153 aa).

This sequence belongs to the SmpB family.

It localises to the cytoplasm. Required for rescue of stalled ribosomes mediated by trans-translation. Binds to transfer-messenger RNA (tmRNA), required for stable association of tmRNA with ribosomes. tmRNA and SmpB together mimic tRNA shape, replacing the anticodon stem-loop with SmpB. tmRNA is encoded by the ssrA gene; the 2 termini fold to resemble tRNA(Ala) and it encodes a 'tag peptide', a short internal open reading frame. During trans-translation Ala-aminoacylated tmRNA acts like a tRNA, entering the A-site of stalled ribosomes, displacing the stalled mRNA. The ribosome then switches to translate the ORF on the tmRNA; the nascent peptide is terminated with the 'tag peptide' encoded by the tmRNA and targeted for degradation. The ribosome is freed to recommence translation, which seems to be the essential function of trans-translation. The sequence is that of SsrA-binding protein from Desulforudis audaxviator (strain MP104C).